The sequence spans 225 residues: Ribosomal RNA small subunit methyltransferase G (225 aa).

S-adenosyl-L-methionine is bound by residues Gly-71, Leu-76, 121–122 (AE), and Arg-139. The segment at 204–225 (VVEARRATPSNGRGRPGRSSRR) is disordered.

The protein belongs to the methyltransferase superfamily. RNA methyltransferase RsmG family.

It localises to the cytoplasm. Its function is as follows. Specifically methylates the N7 position of guanine in position 518 of 16S rRNA. This chain is Ribosomal RNA small subunit methyltransferase G, found in Mycobacterium sp. (strain JLS).